The sequence spans 412 residues: Aspartokinase (412 aa).

2 ACT domains span residues 266–340 (LTIR…GDTN) and 346–412 (IVGV…RQGE).

This sequence belongs to the aspartokinase family.

It carries out the reaction L-aspartate + ATP = 4-phospho-L-aspartate + ADP. The protein operates within amino-acid biosynthesis; L-lysine biosynthesis via DAP pathway; (S)-tetrahydrodipicolinate from L-aspartate: step 1/4. It participates in amino-acid biosynthesis; L-methionine biosynthesis via de novo pathway; L-homoserine from L-aspartate: step 1/3. It functions in the pathway amino-acid biosynthesis; L-threonine biosynthesis; L-threonine from L-aspartate: step 1/5. The sequence is that of Aspartokinase (lysC) from Pseudomonas aeruginosa (strain ATCC 15692 / DSM 22644 / CIP 104116 / JCM 14847 / LMG 12228 / 1C / PRS 101 / PAO1).